Reading from the N-terminus, the 121-residue chain is Ribosome-binding factor A (121 aa).

Belongs to the RbfA family. Monomer. Binds 30S ribosomal subunits, but not 50S ribosomal subunits or 70S ribosomes.

Its subcellular location is the cytoplasm. One of several proteins that assist in the late maturation steps of the functional core of the 30S ribosomal subunit. Associates with free 30S ribosomal subunits (but not with 30S subunits that are part of 70S ribosomes or polysomes). Required for efficient processing of 16S rRNA. May interact with the 5'-terminal helix region of 16S rRNA. This is Ribosome-binding factor A from Lactobacillus helveticus (strain DPC 4571).